Here is a 205-residue protein sequence, read N- to C-terminus: Protein-L-isoaspartate O-methyltransferase (205 aa).

The active site involves Ser-56.

It belongs to the methyltransferase superfamily. L-isoaspartyl/D-aspartyl protein methyltransferase family.

The protein resides in the cytoplasm. The catalysed reaction is [protein]-L-isoaspartate + S-adenosyl-L-methionine = [protein]-L-isoaspartate alpha-methyl ester + S-adenosyl-L-homocysteine. Its function is as follows. Catalyzes the methyl esterification of L-isoaspartyl residues in peptides and proteins that result from spontaneous decomposition of normal L-aspartyl and L-asparaginyl residues. It plays a role in the repair and/or degradation of damaged proteins. The polypeptide is Protein-L-isoaspartate O-methyltransferase (Pyrobaculum arsenaticum (strain DSM 13514 / JCM 11321 / PZ6)).